A 144-amino-acid polypeptide reads, in one-letter code: Large ribosomal subunit protein uL15 (144 aa).

Residues M1–K58 form a disordered region. Positions R21–G31 are enriched in gly residues.

Belongs to the universal ribosomal protein uL15 family. In terms of assembly, part of the 50S ribosomal subunit.

Functionally, binds to the 23S rRNA. This Vibrio atlanticus (strain LGP32) (Vibrio splendidus (strain Mel32)) protein is Large ribosomal subunit protein uL15.